The sequence spans 320 residues: ATP-dependent 6-phosphofructokinase (320 aa).

G12 lines the ATP pocket. ADP is bound at residue 22 to 26 (RGVVR). ATP is bound by residues 73–74 (RF) and 103–106 (GDGS). D104 contributes to the Mg(2+) binding site. Residue 126–128 (TID) participates in substrate binding. D128 acts as the Proton acceptor in catalysis. Residue R155 coordinates ADP. Substrate is bound by residues R163 and 170–172 (MGR). ADP-binding positions include 186 to 188 (GCE), K212, and 214 to 216 (KKH). Residues E223, R244, and 250–253 (HIQR) each bind substrate.

The protein belongs to the phosphofructokinase type A (PFKA) family. ATP-dependent PFK group I subfamily. Prokaryotic clade 'B1' sub-subfamily. Homotetramer. Requires Mg(2+) as cofactor.

The protein resides in the cytoplasm. The catalysed reaction is beta-D-fructose 6-phosphate + ATP = beta-D-fructose 1,6-bisphosphate + ADP + H(+). It participates in carbohydrate degradation; glycolysis; D-glyceraldehyde 3-phosphate and glycerone phosphate from D-glucose: step 3/4. With respect to regulation, allosterically activated by ADP and other diphosphonucleosides, and allosterically inhibited by phosphoenolpyruvate. In terms of biological role, catalyzes the phosphorylation of D-fructose 6-phosphate to fructose 1,6-bisphosphate by ATP, the first committing step of glycolysis. This chain is ATP-dependent 6-phosphofructokinase, found in Vibrio campbellii (strain ATCC BAA-1116).